Reading from the N-terminus, the 292-residue chain is NAD kinase (292 aa).

The active-site Proton acceptor is the Asp-73. Residues 73–74 (DG), 147–148 (NE), His-158, Arg-175, Asp-177, 188–193 (TAYSLS), and Gln-247 contribute to the NAD(+) site.

This sequence belongs to the NAD kinase family. The cofactor is a divalent metal cation.

It localises to the cytoplasm. It carries out the reaction NAD(+) + ATP = ADP + NADP(+) + H(+). In terms of biological role, involved in the regulation of the intracellular balance of NAD and NADP, and is a key enzyme in the biosynthesis of NADP. Catalyzes specifically the phosphorylation on 2'-hydroxyl of the adenosine moiety of NAD to yield NADP. The chain is NAD kinase from Pectobacterium atrosepticum (strain SCRI 1043 / ATCC BAA-672) (Erwinia carotovora subsp. atroseptica).